We begin with the raw amino-acid sequence, 1285 residues long: Nuclear pore complex protein NUP133 (1285 aa).

Disordered regions lie at residues 1–53 (MFSP…PAPW) and 522–580 (EPPE…QTAR). A compositionally biased stretch (polar residues) spans 31 to 41 (TPATQNRNNFI). Composition is skewed to basic and acidic residues over residues 523 to 544 (PPER…DETR) and 553 to 569 (TAGR…DKGN).

It belongs to the nucleoporin Nup133 family. Part of the nuclear pore complex (NPC). The NPC has an eight-fold symmetrical structure comprising a central transport channel and two rings, the cytoplasmic and nuclear rings, to which eight filaments are attached. The cytoplasmic filaments have loose ends, while the nuclear filaments are joined in a distal ring, forming a nuclear basket. NPCs are highly dynamic in configuration and composition, and can be devided in 3 subcomplexes, the NUP62 subcomplex, the NUP107-160 subcomplex and the NUP93 subcomplex, containing approximately 30 different nucleoporin proteins.

The protein resides in the nucleus envelope. The protein localises to the nucleus. It is found in the nuclear pore complex. The chain is Nuclear pore complex protein NUP133 from Arabidopsis thaliana (Mouse-ear cress).